The primary structure comprises 253 residues: Sulfate transporter CysZ (253 aa).

The next 4 membrane-spanning stretches (helical) occupy residues 31-51 (FVIL…WWLF), 75-95 (LLWP…FSTI), 151-171 (IVLL…PVLW), and 222-242 (IPLL…AMWV).

It belongs to the CysZ family.

The protein localises to the cell inner membrane. High affinity, high specificity proton-dependent sulfate transporter, which mediates sulfate uptake. Provides the sulfur source for the cysteine synthesis pathway. In Escherichia coli (strain 55989 / EAEC), this protein is Sulfate transporter CysZ.